The chain runs to 101 residues: Ubiquitin-related modifier 1 (101 aa).

1-thioglycine is present on glycine 101. Residue glycine 101 forms a Glycyl lysine isopeptide (Gly-Lys) (interchain with K-? in acceptor proteins) linkage.

It belongs to the URM1 family. As to quaternary structure, component of a complex at least composed of URM1, CTU2/NCS2 and CTU1/ATPBD3. In terms of processing, C-terminal thiocarboxylation occurs in 2 steps, it is first acyl-adenylated (-COAMP) via the hesA/moeB/thiF part of MOCS3, then thiocarboxylated (-COSH) via the rhodanese domain of MOCS3.

The protein resides in the cytoplasm. Its pathway is tRNA modification; 5-methoxycarbonylmethyl-2-thiouridine-tRNA biosynthesis. Its function is as follows. Acts as a sulfur carrier required for 2-thiolation of mcm(5)S(2)U at tRNA wobble positions of cytosolic tRNA(Lys), tRNA(Glu) and tRNA(Gln). Serves as sulfur donor in tRNA 2-thiolation reaction by being thiocarboxylated (-COSH) at its C-terminus by MOCS3. The sulfur is then transferred to tRNA to form 2-thiolation of mcm(5)S(2)U. Also acts as a ubiquitin-like protein (UBL) that is covalently conjugated via an isopeptide bond to lysine residues of target proteins such as MOCS3, ATPBD3, CTU2, USP15 and CAS. The thiocarboxylated form serves as substrate for conjugation and oxidative stress specifically induces the formation of UBL-protein conjugates. The polypeptide is Ubiquitin-related modifier 1 (Bos taurus (Bovine)).